Here is a 160-residue protein sequence, read N- to C-terminus: UPF0479 membrane protein YLL066W-A (160 aa).

A run of 2 helical transmembrane segments spans residues 39–59 (IVFCLPFFPALFLVPVQKVLQ) and 136–156 (VPMIWLDVFQVFFVFLVISQH).

The protein belongs to the UPF0479 family.

Its subcellular location is the membrane. In Saccharomyces cerevisiae (strain ATCC 204508 / S288c) (Baker's yeast), this protein is UPF0479 membrane protein YLL066W-A.